The following is a 365-amino-acid chain: Aminomethyltransferase (365 aa).

The protein belongs to the GcvT family. In terms of assembly, the glycine cleavage system is composed of four proteins: P, T, L and H.

The catalysed reaction is N(6)-[(R)-S(8)-aminomethyldihydrolipoyl]-L-lysyl-[protein] + (6S)-5,6,7,8-tetrahydrofolate = N(6)-[(R)-dihydrolipoyl]-L-lysyl-[protein] + (6R)-5,10-methylene-5,6,7,8-tetrahydrofolate + NH4(+). In terms of biological role, the glycine cleavage system catalyzes the degradation of glycine. This is Aminomethyltransferase from Yersinia pseudotuberculosis serotype O:1b (strain IP 31758).